Consider the following 163-residue polypeptide: Fatty acid-binding protein homolog (163 aa).

Positions 1 to 23 (MRCLVALILTVLIVTPEVEAKTL) are cleaved as a signal peptide.

It belongs to the calycin superfamily. Fatty-acid binding protein (FABP) family. As to expression, abundant in the fluid surrounding the developing embryo of Ascaris suum.

Functionally, may play a role in sequestering potentially toxic fatty acids and their peroxidation products, or it may be involved in the maintenance of the impermeable lipid layer of the eggshell. In Ascaris suum (Pig roundworm), this protein is Fatty acid-binding protein homolog.